A 269-amino-acid chain; its full sequence is Formamidopyrimidine-DNA glycosylase (269 aa).

Residue Pro-2 is the Schiff-base intermediate with DNA of the active site. The active-site Proton donor is Glu-3. Catalysis depends on Lys-57, which acts as the Proton donor; for beta-elimination activity. DNA is bound by residues His-90, Arg-109, and Lys-150. The FPG-type zinc-finger motif lies at 235–269 (QVYGRKGEPCRVCGTPIVATKHAQRATFYCRQCQK). Arg-259 (proton donor; for delta-elimination activity) is an active-site residue.

This sequence belongs to the FPG family. As to quaternary structure, monomer. Zn(2+) serves as cofactor.

The catalysed reaction is Hydrolysis of DNA containing ring-opened 7-methylguanine residues, releasing 2,6-diamino-4-hydroxy-5-(N-methyl)formamidopyrimidine.. The enzyme catalyses 2'-deoxyribonucleotide-(2'-deoxyribose 5'-phosphate)-2'-deoxyribonucleotide-DNA = a 3'-end 2'-deoxyribonucleotide-(2,3-dehydro-2,3-deoxyribose 5'-phosphate)-DNA + a 5'-end 5'-phospho-2'-deoxyribonucleoside-DNA + H(+). Its function is as follows. Involved in base excision repair of DNA damaged by oxidation or by mutagenic agents. Acts as a DNA glycosylase that recognizes and removes damaged bases. Has a preference for oxidized purines, such as 7,8-dihydro-8-oxoguanine (8-oxoG). Has AP (apurinic/apyrimidinic) lyase activity and introduces nicks in the DNA strand. Cleaves the DNA backbone by beta-delta elimination to generate a single-strand break at the site of the removed base with both 3'- and 5'-phosphates. In Escherichia coli (strain 55989 / EAEC), this protein is Formamidopyrimidine-DNA glycosylase.